We begin with the raw amino-acid sequence, 464 residues long: ATP synthase subunit beta (464 aa).

An ATP-binding site is contributed by 148-155 (GGAGVGKT).

This sequence belongs to the ATPase alpha/beta chains family. F-type ATPases have 2 components, CF(1) - the catalytic core - and CF(0) - the membrane proton channel. CF(1) has five subunits: alpha(3), beta(3), gamma(1), delta(1), epsilon(1). CF(0) has three main subunits: a(1), b(2) and c(9-12). The alpha and beta chains form an alternating ring which encloses part of the gamma chain. CF(1) is attached to CF(0) by a central stalk formed by the gamma and epsilon chains, while a peripheral stalk is formed by the delta and b chains.

It localises to the cell inner membrane. The enzyme catalyses ATP + H2O + 4 H(+)(in) = ADP + phosphate + 5 H(+)(out). In terms of biological role, produces ATP from ADP in the presence of a proton gradient across the membrane. The catalytic sites are hosted primarily by the beta subunits. The chain is ATP synthase subunit beta from Marinobacter nauticus (strain ATCC 700491 / DSM 11845 / VT8) (Marinobacter aquaeolei).